Consider the following 531-residue polypeptide: Na(+)/H(+) antiporter NhaB (531 aa).

A run of 11 helical transmembrane segments spans residues 23–45 (IAIL…VAGW), 66–86 (PGGL…SQVL), 97–117 (LLLI…LFVF), 130–164 (VSLM…FYSI), 206–226 (LLMH…VGEP), 244–264 (LRMG…CFLV), 307–327 (AFVG…VGLI), 352–372 (EEAL…GVII), 393–413 (LVIF…VFVG), 451–471 (ATPN…APLI), and 478–498 (MVWM…LAIE).

The protein belongs to the NhaB Na(+)/H(+) (TC 2.A.34) antiporter family.

It is found in the cell inner membrane. It catalyses the reaction 2 Na(+)(in) + 3 H(+)(out) = 2 Na(+)(out) + 3 H(+)(in). Functionally, na(+)/H(+) antiporter that extrudes sodium in exchange for external protons. The protein is Na(+)/H(+) antiporter NhaB of Shewanella loihica (strain ATCC BAA-1088 / PV-4).